Here is a 337-residue protein sequence, read N- to C-terminus: RAD51-associated protein 1 (337 aa).

Disordered stretches follow at residues 1-69 (MVRP…PPKK) and 88-337 (LSVK…SQVR). 2 positions are modified to phosphoserine: Ser19 and Ser23. Residues 28–38 (ISSSTPVNKSK) show a composition bias toward polar residues. The interaction with DNA stretch occupies residues 32–50 (TPVNKSKTVPKVLKQDKPK). Basic and acidic residues predominate over residues 44-69 (LKQDKPKPNLKNLQKEEVLPTEPPKK). A phosphoserine mark is found at Ser103 and Ser107. Residues 105–118 (EKSTDKQGKEKTEN) are compositionally biased toward basic and acidic residues. An SIM motif motif is present at residues 138 to 143 (LDKITE). Residues 190–205 (SESDPDFDESKESDED) show a composition bias toward acidic residues. Residues 225 to 286 (GEKKERKSKP…PSAESKRPKW (62 aa)) are interaction with DNA. Lys251 is covalently cross-linked (Glycyl lysine isopeptide (Lys-Gly) (interchain with G-Cter in SUMO; alternate)). Lys251 is covalently cross-linked (Glycyl lysine isopeptide (Lys-Gly) (interchain with G-Cter in ubiquitin; alternate)). Residues 286-289 (WVPP) carry the WVPP motif motif. Residues 290 to 304 (AASGSRNSSSNALAG) show a composition bias toward low complexity. Residues 295–334 (RNSSSNALAGTPAKSPSQSLRLGLSRLAPVKRLHPSATSS) are interaction with RAD51. Ser309 carries the post-translational modification Phosphoserine.

In terms of assembly, monomer; elongated monodisperse monomer. Interacts (via C-terminal region) with RAD51; the interaction is direct. Interacts (via SIM motif) with WDR48/UAF1; WDR48/UAF1 and RAD51AP1 cooperate together to stimulate RAD51-mediated homologous recombination (HR). Interacts (via WVPP motif) with DMC1; the interaction is direct. Interacts with PALB2. Interacts with RAD52. In terms of processing, sumoylation with SUMO2/3 by NSMCE2/MMS21 promotes stabilization, possibly by preventing ubiquitination. In terms of tissue distribution, most abundantly expressed in testis. Also expressed in spleen, thymus and bone marrow. Not detected in heart, kidney or liver.

The protein resides in the chromosome. Its subcellular location is the nucleus. It is found in the telomere. Functionally, structure-specific DNA-binding protein involved in DNA repair by promoting RAD51-mediated homologous recombination. Acts by stimulating D-Loop formation by RAD51: specifically enhances joint molecule formation through its structure-specific DNA interaction and its interaction with RAD51. Binds single-stranded DNA (ssDNA), double-stranded DNA (dsDNA) and secondary DNA structures, such as D-loop structures: has a strong preference for branched-DNA structures that are obligatory intermediates during joint molecule formation. Cooperates with WDR48/UAF1 to stimulate RAD51-mediated homologous recombination: both WDR48/UAF1 and RAD51AP1 have coordinated role in DNA-binding during homologous recombination and DNA repair. WDR48/UAF1 and RAD51AP1 also have a coordinated role in DNA-binding to promote USP1-mediated deubiquitination of FANCD2. Also involved in meiosis by promoting DMC1-mediated homologous meiotic recombination. The protein is RAD51-associated protein 1 of Mus musculus (Mouse).